Consider the following 393-residue polypeptide: NAD(P)H-quinone oxidoreductase subunit H, chloroplastic (393 aa).

Belongs to the complex I 49 kDa subunit family. NDH is composed of at least 16 different subunits, 5 of which are encoded in the nucleus.

The protein localises to the plastid. Its subcellular location is the chloroplast thylakoid membrane. It catalyses the reaction a plastoquinone + NADH + (n+1) H(+)(in) = a plastoquinol + NAD(+) + n H(+)(out). The enzyme catalyses a plastoquinone + NADPH + (n+1) H(+)(in) = a plastoquinol + NADP(+) + n H(+)(out). Functionally, NDH shuttles electrons from NAD(P)H:plastoquinone, via FMN and iron-sulfur (Fe-S) centers, to quinones in the photosynthetic chain and possibly in a chloroplast respiratory chain. The immediate electron acceptor for the enzyme in this species is believed to be plastoquinone. Couples the redox reaction to proton translocation, and thus conserves the redox energy in a proton gradient. The protein is NAD(P)H-quinone oxidoreductase subunit H, chloroplastic of Piper cenocladum (Ant piper).